Here is a 438-residue protein sequence, read N- to C-terminus: 3-phosphoshikimate 1-carboxyvinyltransferase 1 (438 aa).

Lys30, Ser31, and Arg35 together coordinate 3-phosphoshikimate. A phosphoenolpyruvate-binding site is contributed by Lys30. Residues Gly104 and Arg132 each coordinate phosphoenolpyruvate. 3-phosphoshikimate contacts are provided by Ser178, Ser179, Gln180, Ser207, Glu326, and His353. Gln180 serves as a coordination point for phosphoenolpyruvate. The active-site Proton acceptor is Glu326. Residues Arg357, Arg398, and Lys423 each contribute to the phosphoenolpyruvate site.

It belongs to the EPSP synthase family. As to quaternary structure, monomer.

The protein localises to the cytoplasm. It carries out the reaction 3-phosphoshikimate + phosphoenolpyruvate = 5-O-(1-carboxyvinyl)-3-phosphoshikimate + phosphate. Its pathway is metabolic intermediate biosynthesis; chorismate biosynthesis; chorismate from D-erythrose 4-phosphate and phosphoenolpyruvate: step 6/7. Functionally, catalyzes the transfer of the enolpyruvyl moiety of phosphoenolpyruvate (PEP) to the 5-hydroxyl of shikimate-3-phosphate (S3P) to produce enolpyruvyl shikimate-3-phosphate and inorganic phosphate. This chain is 3-phosphoshikimate 1-carboxyvinyltransferase 1, found in Streptomyces coelicolor (strain ATCC BAA-471 / A3(2) / M145).